Consider the following 406-residue polypeptide: 4-hydroxy-3-methylbut-2-en-1-yl diphosphate synthase (ferredoxin) (406 aa).

[4Fe-4S] cluster contacts are provided by C315, C318, C349, and E356.

This sequence belongs to the IspG family. It depends on [4Fe-4S] cluster as a cofactor.

The enzyme catalyses (2E)-4-hydroxy-3-methylbut-2-enyl diphosphate + 2 oxidized [2Fe-2S]-[ferredoxin] + H2O = 2-C-methyl-D-erythritol 2,4-cyclic diphosphate + 2 reduced [2Fe-2S]-[ferredoxin] + H(+). It participates in isoprenoid biosynthesis; isopentenyl diphosphate biosynthesis via DXP pathway; isopentenyl diphosphate from 1-deoxy-D-xylulose 5-phosphate: step 5/6. Converts 2C-methyl-D-erythritol 2,4-cyclodiphosphate (ME-2,4cPP) into 1-hydroxy-2-methyl-2-(E)-butenyl 4-diphosphate. The sequence is that of 4-hydroxy-3-methylbut-2-en-1-yl diphosphate synthase (ferredoxin) from Rippkaea orientalis (strain PCC 8801 / RF-1) (Cyanothece sp. (strain PCC 8801)).